The following is a 184-amino-acid chain: dCTP deaminase (184 aa).

Residues 107–112 (KSTYAR), 131–133 (TLE), glutamine 152, tyrosine 166, and glutamine 176 each bind dCTP. Catalysis depends on glutamate 133, which acts as the Proton donor/acceptor.

This sequence belongs to the dCTP deaminase family. In terms of assembly, homotrimer.

The enzyme catalyses dCTP + H2O + H(+) = dUTP + NH4(+). It participates in pyrimidine metabolism; dUMP biosynthesis; dUMP from dCTP (dUTP route): step 1/2. Functionally, catalyzes the deamination of dCTP to dUTP. In Erythrobacter litoralis (strain HTCC2594), this protein is dCTP deaminase.